We begin with the raw amino-acid sequence, 436 residues long: Trigger factor (436 aa).

One can recognise a PPIase FKBP-type domain in the interval 161–246 (EDQLNIDFVG…VNSVSEPKLP (86 aa)).

Belongs to the FKBP-type PPIase family. Tig subfamily.

It is found in the cytoplasm. It carries out the reaction [protein]-peptidylproline (omega=180) = [protein]-peptidylproline (omega=0). In terms of biological role, involved in protein export. Acts as a chaperone by maintaining the newly synthesized protein in an open conformation. Functions as a peptidyl-prolyl cis-trans isomerase. This is Trigger factor from Pseudomonas fluorescens (strain SBW25).